The chain runs to 295 residues: ATP synthase gamma chain (295 aa).

It belongs to the ATPase gamma chain family. In terms of assembly, F-type ATPases have 2 components, CF(1) - the catalytic core - and CF(0) - the membrane proton channel. CF(1) has five subunits: alpha(3), beta(3), gamma(1), delta(1), epsilon(1). CF(0) has three main subunits: a, b and c.

It is found in the cell inner membrane. Produces ATP from ADP in the presence of a proton gradient across the membrane. The gamma chain is believed to be important in regulating ATPase activity and the flow of protons through the CF(0) complex. In Methylorubrum populi (strain ATCC BAA-705 / NCIMB 13946 / BJ001) (Methylobacterium populi), this protein is ATP synthase gamma chain.